Reading from the N-terminus, the 443-residue chain is Tol-Pal system protein TolB (443 aa).

An N-terminal signal peptide occupies residues 1–33; it reads MKIGIINTKIRTVFSAFACMIAASLVCTMPARA.

This sequence belongs to the TolB family. The Tol-Pal system is composed of five core proteins: the inner membrane proteins TolA, TolQ and TolR, the periplasmic protein TolB and the outer membrane protein Pal. They form a network linking the inner and outer membranes and the peptidoglycan layer.

Its subcellular location is the periplasm. Functionally, part of the Tol-Pal system, which plays a role in outer membrane invagination during cell division and is important for maintaining outer membrane integrity. The chain is Tol-Pal system protein TolB from Brucella suis biovar 1 (strain 1330).